Consider the following 134-residue polypeptide: TSC22 domain family protein 3 (134 aa).

An N-acetylmethionine modification is found at Met1. The segment at 1-60 (MNTEMYQTPMEVAVYQLHNFSISFFSSLLGGDVVSVKLDNSASGASVVAIDNKIEQAMDL) is AP1-binding. 2 positions are modified to phosphoserine: Ala42 and Val73. The leucine-zipper stretch occupies residues 76-97 (LKEQIRELVEKNSQLERENTLL). Ser102 carries the post-translational modification Phosphoserine. The segment at 108 to 134 (KFQSCLSPEEPAPESPQVPEAPGGSAV) is disordered.

This sequence belongs to the TSC-22/Dip/Bun family. As to quaternary structure, can form homodimers, however it is likely to function as a monomer. Interacts with NFKB1. Interacts (via N-terminus) with JUN and FOS; these interactions inhibit the binding of active AP1 to its target DNA. In terms of assembly, interacts with MYOD1. Interacts with HDAC1; this interaction affects HDAC1 activity on MYOG promoter and thus inhibits MYOD1 transcriptional activity. Ubiquitously expressed, including in the fetal brain and liver. Expressed in brain, lung, spleen and skeletal muscle. Lower levels detected in heart and kidney. Not detected in the pancreas. In non-lymphoid tissues, in the absence of inflammation, the major source of constitutive expression is the macrophage lineage. Also expressed in cells from different hemopoietic cell lineages, including bone marrow cells, CD34+ stem cells, mature B- and T-cells, monocytes and granulocytes. Down-regulated in activated macrophages from inflammatory lesions of delayed-type hypersensitivity (DTH) reactions, such as in tuberculosis and in Crohn disease, whereas in Burkitt lymphoma, persists in macrophages involved in the phagocytosis of apoptotic malignant cells.

It is found in the cytoplasm. The protein localises to the nucleus. Its function is as follows. Protects T-cells from IL2 deprivation-induced apoptosis through the inhibition of FOXO3A transcriptional activity that leads to the down-regulation of the pro-apoptotic factor BCL2L11. In macrophages, plays a role in the anti-inflammatory and immunosuppressive effects of glucocorticoids and IL10. In T-cells, inhibits anti-CD3-induced NFKB1 nuclear translocation and thereby NFKB1 DNA-binding activities. In vitro, suppresses AP-1 transcription factor complex DNA-binding activities. In terms of biological role, inhibits myogenic differentiation and mediates anti-myogenic effects of glucocorticoids by binding and regulating MYOD1 and HDAC1 transcriptional activity resulting in reduced expression of MYOG. The chain is TSC22 domain family protein 3 from Homo sapiens (Human).